A 106-amino-acid polypeptide reads, in one-letter code: Small ribosomal subunit protein uS10 (106 aa).

The protein belongs to the universal ribosomal protein uS10 family. Part of the 30S ribosomal subunit.

Involved in the binding of tRNA to the ribosomes. The protein is Small ribosomal subunit protein uS10 of Prochlorococcus marinus (strain MIT 9312).